Consider the following 569-residue polypeptide: 2-succinyl-5-enolpyruvyl-6-hydroxy-3-cyclohexene-1-carboxylate synthase (569 aa).

The protein belongs to the TPP enzyme family. MenD subfamily. Homodimer. It depends on Mg(2+) as a cofactor. Mn(2+) serves as cofactor. The cofactor is thiamine diphosphate.

It carries out the reaction isochorismate + 2-oxoglutarate + H(+) = 5-enolpyruvoyl-6-hydroxy-2-succinyl-cyclohex-3-ene-1-carboxylate + CO2. It participates in quinol/quinone metabolism; 1,4-dihydroxy-2-naphthoate biosynthesis; 1,4-dihydroxy-2-naphthoate from chorismate: step 2/7. It functions in the pathway quinol/quinone metabolism; menaquinone biosynthesis. Its function is as follows. Catalyzes the thiamine diphosphate-dependent decarboxylation of 2-oxoglutarate and the subsequent addition of the resulting succinic semialdehyde-thiamine pyrophosphate anion to isochorismate to yield 2-succinyl-5-enolpyruvyl-6-hydroxy-3-cyclohexene-1-carboxylate (SEPHCHC). This Haemophilus ducreyi (strain 35000HP / ATCC 700724) protein is 2-succinyl-5-enolpyruvyl-6-hydroxy-3-cyclohexene-1-carboxylate synthase.